The following is a 390-amino-acid chain: 5-hydroxytryptamine receptor 1B (390 aa).

A disordered region spans residues 1 to 21; it reads MEETGAQCAPPPPAGSQTGVS. The Extracellular portion of the chain corresponds to 1 to 46; it reads MEETGAQCAPPPPAGSQTGVSQVNLSAAPSHNCSTEGYVYQDSVAL. N-linked (GlcNAc...) asparagine glycosylation is found at Asn24 and Asn32. Residues 47–72 traverse the membrane as a helical segment; the sequence is PWKVLLVVLLALITLATTLSNAFVIA. The Cytoplasmic portion of the chain corresponds to 73-86; sequence TVYRTRKLHTPANY. A helical transmembrane segment spans residues 87-111; sequence LIASLAVTDLLVSILVMPISTMYVV. The Extracellular segment spans residues 112-119; it reads TGRWTLGQ. Residues 120–145 traverse the membrane as a helical segment; the sequence is VVCDFWLSSDITCCTASILHLCVIAL. Residues Cys122 and Cys199 are joined by a disulfide bond. Ergotamine-binding residues include Asp129 and Thr134. Residues 146 to 148 carry the DRY motif; important for ligand-induced conformation changes and signaling motif; sequence DRY. Topologically, residues 146 to 165 are cytoplasmic; the sequence is DRYWAITDAVEYSAKRTPKR. The helical transmembrane segment at 166-184 threads the bilayer; that stretch reads AAVMIALVWVFSISISLPP. Residues 185-205 lie on the Extracellular side of the membrane; the sequence is FFWRQAKAEEEVLDCLVNTDH. Val201 serves as a coordination point for ergotamine. The helical transmembrane segment at 206–229 threads the bilayer; that stretch reads ILYTVYSTVGAFYFPTLLLIALYS. The Cytoplasmic segment spans residues 230–315; that stretch reads RIYVEARSRI…AARERKATKT (86 aa). Residues 251–282 are disordered; that stretch reads LTRAQLMTDSPGSTSSVTSINSRAPDVPSESG. The segment covering 255–272 has biased composition (polar residues); that stretch reads QLMTDSPGSTSSVTSINS. A helical transmembrane segment spans residues 316–337; that stretch reads LGIILGAFIVCWLPFFIISLVM. Residues 338 to 347 are Extracellular-facing; the sequence is PICKDACWFH. Residues 348 to 370 form a helical membrane-spanning segment; the sequence is LAIFDFFTWLGYLNSLINPIIYT. The short motif at 365–369 is the NPxxY motif; important for ligand-induced conformation changes and signaling element; it reads NPIIY. Residues 371–390 are Cytoplasmic-facing; that stretch reads MSNEDFKQAFHKLIRFKCAS. Cys388 carries the S-palmitoyl cysteine lipid modification.

It belongs to the G-protein coupled receptor 1 family. Homodimer. Heterodimer with HTR1D. In terms of processing, phosphorylated. Desensitization of the receptor may be mediated by its phosphorylation. Palmitoylated.

It localises to the cell membrane. In terms of biological role, G-protein coupled receptor for 5-hydroxytryptamine (serotonin). Also functions as a receptor for ergot alkaloid derivatives, various anxiolytic and antidepressant drugs and other psychoactive substances, such as lysergic acid diethylamide (LSD). Ligand binding causes a conformation change that triggers signaling via guanine nucleotide-binding proteins (G proteins) and modulates the activity of downstream effectors, such as adenylate cyclase. HTR1B is coupled to G(i)/G(o) G alpha proteins and mediates inhibitory neurotransmission by inhibiting adenylate cyclase activity. Arrestin family members inhibit signaling via G proteins and mediate activation of alternative signaling pathways. Regulates the release of 5-hydroxytryptamine, dopamine and acetylcholine in the brain, and thereby affects neural activity, nociceptive processing, pain perception, mood and behavior. Besides, plays a role in vasoconstriction of cerebral arteries. In Equus caballus (Horse), this protein is 5-hydroxytryptamine receptor 1B (HTR1B).